Here is a 403-residue protein sequence, read N- to C-terminus: E2F transcription factor-like E2FE (403 aa).

Residues 34–99 (RKQKSLGLLC…RAKNQYTWKG (66 aa)) mediate DNA binding. The interval 128–167 (VKGSDDEDDDEESSQPHSSSQTDSSKPGSLPQSSDPSKID) is disordered. The span at 142 to 152 (QPHSSSQTDSS) shows a compositional bias: low complexity. Residues 153 to 163 (KPGSLPQSSDP) are compositionally biased toward polar residues. The DNA-binding element occupies 169-250 (RREKSLGLLT…SRKPAFKWLG (82 aa)). A disordered region spans residues 282–319 (VKRSKSSSSSQENATERRLKMKKHSTPESSYNKSFDVH).

Belongs to the E2F/DP family. In terms of tissue distribution, expressed exclusively in mitotically dividing cells. Highly expressed in young leaves and mature flowers. Lower expression in young stalk and in young and mature flowers.

Its subcellular location is the nucleus. Functionally, inhibitor of E2F-dependent activation of gene expression. Binds specifically the E2 recognition site without interacting with DP proteins and prevents transcription activation by E2F/DP heterodimers. Controls the timing of endocycle onset and inhibits endoreduplication. In Arabidopsis thaliana (Mouse-ear cress), this protein is E2F transcription factor-like E2FE (E2FE).